Consider the following 891-residue polypeptide: Dynein axonemal intermediate chain 3 (891 aa).

The span at 1–17 (MAPKQKKKTSRGKKRLK) shows a compositional bias: basic residues. The interval 1 to 22 (MAPKQKKKTSRGKKRLKPVLAA) is disordered. WD repeat units lie at residues 395–435 (ESPD…DRIE), 477–533 (GHKK…PLTP), 670–709 (IHDGTVHTIQRSPFYNDIILTVGGWNVAIWKEGVMTGPLL), and 713–753 (CAPK…HEPA). Positions 818–861 (LEYVEQRKKIREQEKKEMELEMAKKKVKTYQKSKEQMQAELKMD) form a coiled coil.

In terms of assembly, interacts with ACTR2; this interaction reduces binding of the Arp2/3 complex to the VCA domain of nucleation promoting factors. Part of the multisubunit axonemal dynein complex formed at least of two heavy chains and a number of intermediate and light chains. Found in a associated with the catalytic heavy chain DNAH2, the intermediate chain DNAI4, and the light chain DYNLT1.

It localises to the cytoplasm. Its function is as follows. Acts as a negative regulator of cell migration, invasion, and metastasis downstream of p53/TP53, through inhibition of Arp2/3 complex-mediated actin polymerization. Via its association with the multisubunit axonemal dynein complex, is potentially involved in the regulation of cilia function. May play a role in osteogenesis of dental tissue-derived mesenchymal stem cells. The chain is Dynein axonemal intermediate chain 3 from Homo sapiens (Human).